The chain runs to 293 residues: MNSYWLNVYKPRGISSAKLVSIIKKVLGKVKIGHSGTLDVEAEGVLPLAIGEATKLVQMLIDAKKTYIFTVKFGKQTDSGDYAGKVIAITDYIPSKENAYAICSKFIGTITQIPPAFSALKVNGVRAYKLARDGKEVELKPRNITIYDLKCLNYDEQNATATYYAECSKGTYIRTLAEDLALSLQSLGFVIELRRTQVGIFKEENSIRIDSFNDITKLSLEEKNIKIEAILDDILVLDANDEQAQKIKYGQKCLFDYDKNVDFMWVRYKGVLLAIGSLNKNCFHSLRVFNLTQ.

Catalysis depends on Asp-39, which acts as the Nucleophile.

The protein belongs to the pseudouridine synthase TruB family. Type 1 subfamily.

The catalysed reaction is uridine(55) in tRNA = pseudouridine(55) in tRNA. In terms of biological role, responsible for synthesis of pseudouridine from uracil-55 in the psi GC loop of transfer RNAs. The polypeptide is tRNA pseudouridine synthase B (Rickettsia bellii (strain OSU 85-389)).